A 447-amino-acid chain; its full sequence is Sporulation protein YpeB (447 aa).

The protein belongs to the YpeB family.

Its function is as follows. Required for spore cortex hydrolysis during germination. Appears to be required for either expression, localization, activation or function of SleB. The protein is Sporulation protein YpeB of Oceanobacillus iheyensis (strain DSM 14371 / CIP 107618 / JCM 11309 / KCTC 3954 / HTE831).